The following is a 348-amino-acid chain: tRNA pseudouridine synthase D (348 aa).

Phe26 provides a ligand contact to substrate. Asp79 serves as the catalytic Nucleophile. Substrate is bound at residue Asn128. The TRUD domain occupies 154-302 (GVPNYFGSQR…VDPARRALLL (149 aa)). Phe328 is a binding site for substrate.

The protein belongs to the pseudouridine synthase TruD family.

The catalysed reaction is uridine(13) in tRNA = pseudouridine(13) in tRNA. Responsible for synthesis of pseudouridine from uracil-13 in transfer RNAs. The sequence is that of tRNA pseudouridine synthase D from Serratia proteamaculans (strain 568).